A 95-amino-acid chain; its full sequence is Aspartyl/glutamyl-tRNA(Asn/Gln) amidotransferase subunit C (95 aa).

This sequence belongs to the GatC family. As to quaternary structure, heterotrimer of A, B and C subunits.

It catalyses the reaction L-glutamyl-tRNA(Gln) + L-glutamine + ATP + H2O = L-glutaminyl-tRNA(Gln) + L-glutamate + ADP + phosphate + H(+). The catalysed reaction is L-aspartyl-tRNA(Asn) + L-glutamine + ATP + H2O = L-asparaginyl-tRNA(Asn) + L-glutamate + ADP + phosphate + 2 H(+). Allows the formation of correctly charged Asn-tRNA(Asn) or Gln-tRNA(Gln) through the transamidation of misacylated Asp-tRNA(Asn) or Glu-tRNA(Gln) in organisms which lack either or both of asparaginyl-tRNA or glutaminyl-tRNA synthetases. The reaction takes place in the presence of glutamine and ATP through an activated phospho-Asp-tRNA(Asn) or phospho-Glu-tRNA(Gln). The chain is Aspartyl/glutamyl-tRNA(Asn/Gln) amidotransferase subunit C from Dehalococcoides mccartyi (strain ATCC BAA-2266 / KCTC 15142 / 195) (Dehalococcoides ethenogenes (strain 195)).